Reading from the N-terminus, the 567-residue chain is 2-succinyl-5-enolpyruvyl-6-hydroxy-3-cyclohexene-1-carboxylate synthase (567 aa).

It belongs to the TPP enzyme family. MenD subfamily. In terms of assembly, homodimer. The cofactor is Mg(2+). Requires Mn(2+) as cofactor. Thiamine diphosphate is required as a cofactor.

It carries out the reaction isochorismate + 2-oxoglutarate + H(+) = 5-enolpyruvoyl-6-hydroxy-2-succinyl-cyclohex-3-ene-1-carboxylate + CO2. Its pathway is quinol/quinone metabolism; 1,4-dihydroxy-2-naphthoate biosynthesis; 1,4-dihydroxy-2-naphthoate from chorismate: step 2/7. It participates in quinol/quinone metabolism; menaquinone biosynthesis. Its function is as follows. Catalyzes the thiamine diphosphate-dependent decarboxylation of 2-oxoglutarate and the subsequent addition of the resulting succinic semialdehyde-thiamine pyrophosphate anion to isochorismate to yield 2-succinyl-5-enolpyruvyl-6-hydroxy-3-cyclohexene-1-carboxylate (SEPHCHC). This is 2-succinyl-5-enolpyruvyl-6-hydroxy-3-cyclohexene-1-carboxylate synthase from Yersinia pseudotuberculosis serotype I (strain IP32953).